A 365-amino-acid chain; its full sequence is Phospho-N-acetylmuramoyl-pentapeptide-transferase (365 aa).

9 helical membrane passes run 19–39 (LLILLTVVLFLLMTLFQWLLT), 47–67 (AVILPVSVSAIACGLLGFGVI), 91–111 (AGTPTMGGIFFIPVAVGVALI), 115–135 (FDPQVVAVGIVTLAYMMIGWV), 155–175 (LLLQIAVAVLFCLWMLWTGSP), 184–204 (GNLIIPLGWLFWILAIFVLVA), 224–244 (AIAFLGLAAIVAPTSVGLMIF), 281–301 (AVGLLSGNLWGLFIISGIFFV), and 344–364 (TQIVGVFYLINAGLAILGFIS).

This sequence belongs to the glycosyltransferase 4 family. MraY subfamily. It depends on Mg(2+) as a cofactor.

Its subcellular location is the cell inner membrane. It carries out the reaction UDP-N-acetyl-alpha-D-muramoyl-L-alanyl-gamma-D-glutamyl-meso-2,6-diaminopimeloyl-D-alanyl-D-alanine + di-trans,octa-cis-undecaprenyl phosphate = di-trans,octa-cis-undecaprenyl diphospho-N-acetyl-alpha-D-muramoyl-L-alanyl-D-glutamyl-meso-2,6-diaminopimeloyl-D-alanyl-D-alanine + UMP. It functions in the pathway cell wall biogenesis; peptidoglycan biosynthesis. Catalyzes the initial step of the lipid cycle reactions in the biosynthesis of the cell wall peptidoglycan: transfers peptidoglycan precursor phospho-MurNAc-pentapeptide from UDP-MurNAc-pentapeptide onto the lipid carrier undecaprenyl phosphate, yielding undecaprenyl-pyrophosphoryl-MurNAc-pentapeptide, known as lipid I. This is Phospho-N-acetylmuramoyl-pentapeptide-transferase from Gloeothece citriformis (strain PCC 7424) (Cyanothece sp. (strain PCC 7424)).